Reading from the N-terminus, the 409-residue chain is Probable plastid-lipid-associated protein 12, chloroplastic (409 aa).

The N-terminal 55 residues, M1–S55, are a transit peptide targeting the chloroplast.

It belongs to the PAP/fibrillin family.

It is found in the plastid. The protein resides in the chloroplast thylakoid. The polypeptide is Probable plastid-lipid-associated protein 12, chloroplastic (PAP12) (Arabidopsis thaliana (Mouse-ear cress)).